A 462-amino-acid polypeptide reads, in one-letter code: L-seryl-tRNA(Sec) selenium transferase (462 aa).

Position 294 is an N6-(pyridoxal phosphate)lysine (K294).

It belongs to the SelA family. As to quaternary structure, homodecamer; pentamer of dimers. Binds only one seryl-tRNA(Sec) per dimer. It depends on pyridoxal 5'-phosphate as a cofactor.

Its subcellular location is the cytoplasm. It carries out the reaction L-seryl-tRNA(Sec) + selenophosphate + H(+) = L-selenocysteinyl-tRNA(Sec) + phosphate. It participates in aminoacyl-tRNA biosynthesis; selenocysteinyl-tRNA(Sec) biosynthesis; selenocysteinyl-tRNA(Sec) from L-seryl-tRNA(Sec) (bacterial route): step 1/1. Its function is as follows. Converts seryl-tRNA(Sec) to selenocysteinyl-tRNA(Sec) required for selenoprotein biosynthesis. The polypeptide is L-seryl-tRNA(Sec) selenium transferase (Yersinia pestis bv. Antiqua (strain Antiqua)).